A 65-amino-acid polypeptide reads, in one-letter code: Omega-lycotoxin-Am1f (65 aa).

Positions G1 to R18 are excised as a propeptide. Disulfide bonds link C22–C37, C29–C42, C36–C62, and C44–C60.

This sequence belongs to the neurotoxin omega-lctx family. Expressed by the venom gland.

Its subcellular location is the secreted. Its function is as follows. Modulates Cav2.1/CACNA1A voltage-gated calcium channels (P/Q-type currents) in rat cerebellar Purkinje cells and hippocampal CA1-CA3 neurons. At saturating concentrations (&gt;10 nM) decelerates activation kinetics and slightly increases peak amplitude without affecting deactivation kinetics. In vivo, does not cause death when intravenously injected into mice. In rat models, through its activity on Cav2.1/CACNA1A, has an ameliorative effect on memory defects provoked by hyperstimulation of N-methyl-D-aspartate receptors (NMDARs) in the hippocampus. In Alopecosa marikovskyi (Wolf spider), this protein is Omega-lycotoxin-Am1f.